Reading from the N-terminus, the 129-residue chain is Succinate dehydrogenase assembly factor 3, mitochondrial (129 aa).

Residues 1-21 (MQVNHLLRQAVKQTTRAGRLG) constitute a mitochondrion transit peptide.

The protein belongs to the complex I LYR family. SDHAF3 subfamily. In terms of assembly, interacts with the iron-sulfur protein subunit within the SDH catalytic dimer.

It is found in the mitochondrion matrix. Plays an essential role in the assembly of succinate dehydrogenase (SDH), an enzyme complex (also referred to as respiratory complex II) that is a component of both the tricarboxylic acid (TCA) cycle and the mitochondrial electron transport chain, and which couples the oxidation of succinate to fumarate with the reduction of ubiquinone (coenzyme Q) to ubiquinol. Promotes maturation of the iron-sulfur protein subunit of the SDH catalytic dimer, protecting it from the deleterious effects of oxidants. May act together with SDHAF1. This is Succinate dehydrogenase assembly factor 3, mitochondrial from Kluyveromyces lactis (strain ATCC 8585 / CBS 2359 / DSM 70799 / NBRC 1267 / NRRL Y-1140 / WM37) (Yeast).